Reading from the N-terminus, the 699-residue chain is Serine/threonine-protein kinase PRR2 (699 aa).

The tract at residues 168-193 (SSTKKNLANDISDNKHNNNSSNTIGH) is disordered. Residues 184 to 193 (NNNSSNTIGH) are compositionally biased toward polar residues. The Protein kinase domain maps to 361-653 (RDLDVVLGEG…INGILQDGWI (293 aa)). Residues 367–375 (LGEGSGGKV) and lysine 390 each bind ATP. The active-site Proton acceptor is aspartate 484.

The protein belongs to the protein kinase superfamily. Ser/Thr protein kinase family.

The enzyme catalyses L-seryl-[protein] + ATP = O-phospho-L-seryl-[protein] + ADP + H(+). The catalysed reaction is L-threonyl-[protein] + ATP = O-phospho-L-threonyl-[protein] + ADP + H(+). Its function is as follows. Protein kinase that functions as a regulator in the pheromone-induced mating pathway downstream of mitogen-activated protein kinase (MAPK) FUS3. Diminishes transcriptional induction of genes in response to pheromone signaling. The protein is Serine/threonine-protein kinase PRR2 (PRR2) of Saccharomyces cerevisiae (strain ATCC 204508 / S288c) (Baker's yeast).